The primary structure comprises 308 residues: Ribonuclease HIII (308 aa).

Positions 91-308 (KNVIGSDEVG…TEKALKMVKK (218 aa)) constitute an RNase H type-2 domain. A divalent metal cation is bound by residues Asp-97, Glu-98, and Asp-202.

Belongs to the RNase HII family. RnhC subfamily. The cofactor is Mn(2+). Mg(2+) is required as a cofactor.

The protein resides in the cytoplasm. It carries out the reaction Endonucleolytic cleavage to 5'-phosphomonoester.. Its function is as follows. Endonuclease that specifically degrades the RNA of RNA-DNA hybrids. The protein is Ribonuclease HIII of Listeria monocytogenes serovar 1/2a (strain ATCC BAA-679 / EGD-e).